We begin with the raw amino-acid sequence, 129 residues long: MPAKKTAHKRRVKKHVESGVAHIHSTFNNTLVMITDVQGNAVAWSSAGALGFKGSRKSTPFAAQMAAEAAAKSAIDQGMKHIEVSVKGPGSGRESAIRALQAAGLEITSIRDVTPVPHNGSRPPKRRRV.

It belongs to the universal ribosomal protein uS11 family. As to quaternary structure, part of the 30S ribosomal subunit. Interacts with proteins S7 and S18. Binds to IF-3.

Located on the platform of the 30S subunit, it bridges several disparate RNA helices of the 16S rRNA. Forms part of the Shine-Dalgarno cleft in the 70S ribosome. In Lactobacillus delbrueckii subsp. bulgaricus (strain ATCC 11842 / DSM 20081 / BCRC 10696 / JCM 1002 / NBRC 13953 / NCIMB 11778 / NCTC 12712 / WDCM 00102 / Lb 14), this protein is Small ribosomal subunit protein uS11.